A 413-amino-acid polypeptide reads, in one-letter code: MDDGRGAGGFGGGPAVRALDTEAVHAGRDDLARQGLHAAPIDLSTTYPSYDSRAEAARIDAFAADGAEPAGPPVYGRLGNPTVARFETALARLEGTDSAVAFASGMAALSAVLLVRNAMGLRHVVAVRPLYGCSDHLLTAGLLGSEVTWVDPAGVADALRPDTGLVMVESPANPTLAELDLRALAHACGSVPLLADNTFATPVLQRPAEHGARLVLHSATKYLGGHGDVMAGVVACDEEFARGLRQIRFATGGVLHPLAGYLLLRGLSTLPIRVRAASSNAAELARRLAADPRVARVHYPRIGGAMIAFEVYGDPHEVIAGVRLITPAVSLGSVDSLIQHPASISHRIVDAADRRGAGVSDRLLRLSVGLEDVEDLWADLDGALGTDRLPETAGAGREPSRTALRLPERAADR.

Pyridoxal 5'-phosphate contacts are provided by residues 75–77 and 105–106; these read YGR and GM. Y131 serves as a coordination point for substrate. 218–220 is a binding site for pyridoxal 5'-phosphate; the sequence is SAT. At K221 the chain carries N6-(pyridoxal phosphate)lysine. R365 provides a ligand contact to substrate. The disordered stretch occupies residues 388–413; the sequence is RLPETAGAGREPSRTALRLPERAADR.

Belongs to the trans-sulfuration enzymes family. As to quaternary structure, homotetramer; dimer of active dimers. It depends on pyridoxal 5'-phosphate as a cofactor.

It catalyses the reaction L-methionine + H2O = methanethiol + 2-oxobutanoate + NH4(+). The catalysed reaction is L-homocysteine + H2O = 2-oxobutanoate + hydrogen sulfide + NH4(+) + H(+). The enzyme catalyses L-cysteine + H2O = hydrogen sulfide + pyruvate + NH4(+) + H(+). Catalyzes the alpha,gamma-elimination of L-methionine to produce methanethiol, 2-oxobutanoate and ammonia. Is probably involved in L-methionine catabolism. Is also able to catalyze the alpha,gamma-elimination of L-homocysteine, and, to a lesser extent, the alpha,beta-elimination of L-cysteine. The polypeptide is L-methionine gamma-lyase (Streptomyces avermitilis (strain ATCC 31267 / DSM 46492 / JCM 5070 / NBRC 14893 / NCIMB 12804 / NRRL 8165 / MA-4680)).